The primary structure comprises 30 residues: GLPCGESCVFIPCITTVVGCSCKNKVCYND.

The cyclopeptide (Gly-Asp) cross-link spans 1-30; that stretch reads GLPCGESCVFIPCITTVVGCSCKNKVCYND. Cystine bridges form between Cys-4-Cys-20, Cys-8-Cys-22, and Cys-13-Cys-27.

Contains 3 disulfide bonds. Post-translationally, this is a cyclic peptide.

Functionally, probably participates in a plant defense mechanism. This is Cyclotide cter-H from Clitoria ternatea (Butterfly pea).